A 145-amino-acid polypeptide reads, in one-letter code: D-aminoacyl-tRNA deacylase (145 aa).

Residues 137–138 carry the Gly-cisPro motif, important for rejection of L-amino acids motif; it reads GP.

This sequence belongs to the DTD family. In terms of assembly, homodimer.

It is found in the cytoplasm. It carries out the reaction glycyl-tRNA(Ala) + H2O = tRNA(Ala) + glycine + H(+). The enzyme catalyses a D-aminoacyl-tRNA + H2O = a tRNA + a D-alpha-amino acid + H(+). An aminoacyl-tRNA editing enzyme that deacylates mischarged D-aminoacyl-tRNAs. Also deacylates mischarged glycyl-tRNA(Ala), protecting cells against glycine mischarging by AlaRS. Acts via tRNA-based rather than protein-based catalysis; rejects L-amino acids rather than detecting D-amino acids in the active site. By recycling D-aminoacyl-tRNA to D-amino acids and free tRNA molecules, this enzyme counteracts the toxicity associated with the formation of D-aminoacyl-tRNA entities in vivo and helps enforce protein L-homochirality. This is D-aminoacyl-tRNA deacylase from Cereibacter sphaeroides (strain ATCC 17029 / ATH 2.4.9) (Rhodobacter sphaeroides).